Consider the following 745-residue polypeptide: Translation initiation factor IF-2 (745 aa).

The disordered stretch occupies residues 1-154 (MSDKPRRDTG…PAARPVVRPR (154 aa)). Residues 36 to 56 (TGRSPNASTGGNRSAGNQAGN) are compositionally biased toward polar residues. Residues 68 to 98 (ATTPAPNRNTPPAGARQGGAANARTGTPPVA) are compositionally biased toward low complexity. Residues 99–113 (RGGGGGVTPPTGRGG) are compositionally biased toward gly residues. Residues 114 to 126 (NNPRAARNQPRSR) show a composition bias toward low complexity. Residues 127-138 (QQPEEREREHVL) show a composition bias toward basic and acidic residues. Residues 241 to 410 (PRPPVVTIMG…LLVADLEDLR (170 aa)) form the tr-type G domain. A G1 region spans residues 250–257 (GHVDHGKT). Position 250–257 (250–257 (GHVDHGKT)) interacts with GTP. The segment at 275–279 (GITQH) is G2. The G3 stretch occupies residues 296-299 (DTPG). Residues 296–300 (DTPGH) and 350–353 (NKID) contribute to the GTP site. Residues 350 to 353 (NKID) are G4. Positions 386 to 388 (SAR) are G5.

The protein belongs to the TRAFAC class translation factor GTPase superfamily. Classic translation factor GTPase family. IF-2 subfamily.

The protein localises to the cytoplasm. One of the essential components for the initiation of protein synthesis. Protects formylmethionyl-tRNA from spontaneous hydrolysis and promotes its binding to the 30S ribosomal subunits. Also involved in the hydrolysis of GTP during the formation of the 70S ribosomal complex. In Chloroflexus aurantiacus (strain ATCC 29366 / DSM 635 / J-10-fl), this protein is Translation initiation factor IF-2.